Consider the following 260-residue polypeptide: ProSAAS (260 aa).

Positions 1 to 33 (MAGSPLLCGPRAGGVGLLVLLLLGLLRLPPTLS) are cleaved as a signal peptide. The proSAAS(1-180) stretch occupies residues 34-215 (ARPVKEPRSL…SSEPEAAPAP (182 aa)). 2 disordered regions span residues 162 to 187 (AALR…ADET) and 206 to 234 (SSEP…PPEN). Positions 221-260 (AVDQDLGPEVPPENVLGALLRVKRLENSSPQAPARRLLPP) are C-terminal inhibitory domain; interacts with PCSK1. A Sufficient for inhibition of PCSK1 motif is present at residues 239-244 (LLRVKR).

Interacts via the C-terminal inhibitory domain with PCSK1 65 kDa form. Post-translationally, proteolytically cleaved in the Golgi. Big SAAS, Little SAAS, PEN and Big LEN are the major processed peptides in proSAAS-overexpressing PC-12 phaeochromocytoma cells (lacking PCSK1 and PCSK2 endopeptidases). Peptides corresponding to PEN and a proSAAS aa 40-59 have been detected in wild-type PC-12 cells. As to expression, expressed in adult brain (all major structural regions), adrenal gland (medulla) and spinal cord (dorsal and ventral horn). Expressed in pancreatic islands.

Its subcellular location is the secreted. It is found in the golgi apparatus. The protein localises to the trans-Golgi network. Its function is as follows. May function in the control of the neuroendocrine secretory pathway. Proposed be a specific endogenous inhibitor of PCSK1. ProSAAS and Big PEN-LEN, both containing the C-terminal inhibitory domain, but not the processed peptides reduce PCSK1 activity in the endoplasmic reticulum and Golgi. It reduces the activity of the 87 kDa form but not the autocatalytically derived 65 kDa form of PCSK1. Subsequent processing of proSAAS may eliminate the inhibition. Slows down convertase-mediated processing of proopiomelanocortin and proenkephalin. May control the intracellular timing of PCSK1 rather than its total level of activity. Endogenous ligand for GPR171. Neuropeptide involved in the regulation of feeding. The polypeptide is ProSAAS (Pcsk1n) (Rattus norvegicus (Rat)).